The chain runs to 276 residues: MAIKKYKPTTNGCRNMSVSAFSEITTQTPEKRLLVSHKDQAGRNNQGKITVRHRGGGVKRKYRLIDFKRNKDNIVGKVATIEYDPNRSANIALIHYLDGEKRYILAPKGLTVGMQIVSGKEADIKVANCLPLMNIPVGTTVHNIELKPGKGGQIARSAGSFCQIISREDKYVLLRLQSGEVRKVLGTCRATIGEIGNESYKLINYGKAGKKRFLGIRPTVRGSAMNPNDHPHGGGEGRAPIGRKSPMTPWGKKARGVKTRDRKKASNALIIRRRTK.

The interval 221–276 is disordered; it reads RGSAMNPNDHPHGGGEGRAPIGRKSPMTPWGKKARGVKTRDRKKASNALIIRRRTK. Residues 252 to 276 show a composition bias toward basic residues; that stretch reads KKARGVKTRDRKKASNALIIRRRTK.

Belongs to the universal ribosomal protein uL2 family. As to quaternary structure, part of the 50S ribosomal subunit. Forms a bridge to the 30S subunit in the 70S ribosome.

Functionally, one of the primary rRNA binding proteins. Required for association of the 30S and 50S subunits to form the 70S ribosome, for tRNA binding and peptide bond formation. It has been suggested to have peptidyltransferase activity; this is somewhat controversial. Makes several contacts with the 16S rRNA in the 70S ribosome. The protein is Large ribosomal subunit protein uL2 of Onion yellows phytoplasma (strain OY-M).